Reading from the N-terminus, the 227-residue chain is Cytochrome c oxidase subunit 2 (227 aa).

Over 1–14 (MAYPMQLGFQDATS) the chain is Mitochondrial intermembrane. The chain crosses the membrane as a helical span at residues 15–45 (PIMEELLHFHDHTLMIVFLISSLVLYVISLM). Residues 46–59 (LTTKLTHTSTMDAQ) lie on the Mitochondrial matrix side of the membrane. A helical transmembrane segment spans residues 60–87 (EVETIWTILPAIILILIALPSLRILYMM). Residues 88 to 227 (DEINNPSLTV…YFEKWSASML (140 aa)) are Mitochondrial intermembrane-facing. Histidine 161, cysteine 196, glutamate 198, cysteine 200, histidine 204, and methionine 207 together coordinate Cu cation. Glutamate 198 is a Mg(2+) binding site. Tyrosine 218 is subject to Phosphotyrosine.

Belongs to the cytochrome c oxidase subunit 2 family. In terms of assembly, component of the cytochrome c oxidase (complex IV, CIV), a multisubunit enzyme composed of 14 subunits. The complex is composed of a catalytic core of 3 subunits MT-CO1, MT-CO2 and MT-CO3, encoded in the mitochondrial DNA, and 11 supernumerary subunits COX4I, COX5A, COX5B, COX6A, COX6B, COX6C, COX7A, COX7B, COX7C, COX8 and NDUFA4, which are encoded in the nuclear genome. The complex exists as a monomer or a dimer and forms supercomplexes (SCs) in the inner mitochondrial membrane with NADH-ubiquinone oxidoreductase (complex I, CI) and ubiquinol-cytochrome c oxidoreductase (cytochrome b-c1 complex, complex III, CIII), resulting in different assemblies (supercomplex SCI(1)III(2)IV(1) and megacomplex MCI(2)III(2)IV(2)). Found in a complex with TMEM177, COA6, COX18, COX20, SCO1 and SCO2. Interacts with TMEM177 in a COX20-dependent manner. Interacts with COX20. Interacts with COX16. Requires Cu cation as cofactor.

The protein resides in the mitochondrion inner membrane. It carries out the reaction 4 Fe(II)-[cytochrome c] + O2 + 8 H(+)(in) = 4 Fe(III)-[cytochrome c] + 2 H2O + 4 H(+)(out). Its function is as follows. Component of the cytochrome c oxidase, the last enzyme in the mitochondrial electron transport chain which drives oxidative phosphorylation. The respiratory chain contains 3 multisubunit complexes succinate dehydrogenase (complex II, CII), ubiquinol-cytochrome c oxidoreductase (cytochrome b-c1 complex, complex III, CIII) and cytochrome c oxidase (complex IV, CIV), that cooperate to transfer electrons derived from NADH and succinate to molecular oxygen, creating an electrochemical gradient over the inner membrane that drives transmembrane transport and the ATP synthase. Cytochrome c oxidase is the component of the respiratory chain that catalyzes the reduction of oxygen to water. Electrons originating from reduced cytochrome c in the intermembrane space (IMS) are transferred via the dinuclear copper A center (CU(A)) of subunit 2 and heme A of subunit 1 to the active site in subunit 1, a binuclear center (BNC) formed by heme A3 and copper B (CU(B)). The BNC reduces molecular oxygen to 2 water molecules using 4 electrons from cytochrome c in the IMS and 4 protons from the mitochondrial matrix. This Rusa unicolor (Sambar) protein is Cytochrome c oxidase subunit 2 (MT-CO2).